The following is a 309-amino-acid chain: Taste receptor type 2 member 124 (309 aa).

Topologically, residues 1-7 are extracellular; the sequence is MVPVLHS. Residues 8–28 form a helical membrane-spanning segment; the sequence is LSTIILIAEFVWGNLSNGLIV. Topologically, residues 29–46 are cytoplasmic; the sequence is LKNCIDWINKKELSTVDQ. Residues 47–67 traverse the membrane as a helical segment; it reads ILIVLAISRISLIWETLIIWV. The Extracellular segment spans residues 68-86; the sequence is KDQLISSITIEELKIIVFS. A helical transmembrane segment spans residues 87 to 107; it reads FILSSHFSLWLATALSIFYLF. The Cytoplasmic segment spans residues 108-127; that stretch reads RIPNCYWQIFLYLKWRIKQL. Residues 128-148 form a helical membrane-spanning segment; it reads IVHMLLGSLVFLVANMIQITI. The Extracellular segment spans residues 149-183; that stretch reads TLEERFYQYGGNTSVNSMETEFSILIELMLFNMTM. N-linked (GlcNAc...) asparagine glycans are attached at residues N160 and N180. Residues 184 to 204 form a helical membrane-spanning segment; sequence FSIIPFSLALISFLLLIFSLW. The Cytoplasmic portion of the chain corresponds to 205–230; it reads KHLQKMPLNSRGDRDPSATAHRNALR. The helical transmembrane segment at 231–251 threads the bilayer; the sequence is ILVSFLLLYTIYFLSLLISWV. At 252–261 the chain is on the extracellular side; it reads AQKNQSELVH. The N-linked (GlcNAc...) asparagine glycan is linked to N255. A helical membrane pass occupies residues 262–282; the sequence is IICMITSLVYPSFHSYILILG. Residues 283 to 309 lie on the Cytoplasmic side of the membrane; that stretch reads NYKLKQTSLWVMRQLGCRMKRQNTPTT.

This sequence belongs to the G-protein coupled receptor T2R family.

The protein localises to the membrane. Its function is as follows. Putative taste receptor which may play a role in the perception of bitterness. This Mus musculus (Mouse) protein is Taste receptor type 2 member 124.